Reading from the N-terminus, the 529-residue chain is Bifunctional purine biosynthesis protein PurH (529 aa).

Positions 1–148 (MQQRRPVRRA…KNHKDVAIVV (148 aa)) constitute an MGS-like domain.

This sequence belongs to the PurH family.

The catalysed reaction is (6R)-10-formyltetrahydrofolate + 5-amino-1-(5-phospho-beta-D-ribosyl)imidazole-4-carboxamide = 5-formamido-1-(5-phospho-D-ribosyl)imidazole-4-carboxamide + (6S)-5,6,7,8-tetrahydrofolate. It carries out the reaction IMP + H2O = 5-formamido-1-(5-phospho-D-ribosyl)imidazole-4-carboxamide. It functions in the pathway purine metabolism; IMP biosynthesis via de novo pathway; 5-formamido-1-(5-phospho-D-ribosyl)imidazole-4-carboxamide from 5-amino-1-(5-phospho-D-ribosyl)imidazole-4-carboxamide (10-formyl THF route): step 1/1. Its pathway is purine metabolism; IMP biosynthesis via de novo pathway; IMP from 5-formamido-1-(5-phospho-D-ribosyl)imidazole-4-carboxamide: step 1/1. This chain is Bifunctional purine biosynthesis protein PurH, found in Salmonella paratyphi C (strain RKS4594).